A 238-amino-acid chain; its full sequence is 2-C-methyl-D-erythritol 4-phosphate cytidylyltransferase (238 aa).

It belongs to the IspD/TarI cytidylyltransferase family. IspD subfamily.

It catalyses the reaction 2-C-methyl-D-erythritol 4-phosphate + CTP + H(+) = 4-CDP-2-C-methyl-D-erythritol + diphosphate. Its pathway is isoprenoid biosynthesis; isopentenyl diphosphate biosynthesis via DXP pathway; isopentenyl diphosphate from 1-deoxy-D-xylulose 5-phosphate: step 2/6. Its function is as follows. Catalyzes the formation of 4-diphosphocytidyl-2-C-methyl-D-erythritol from CTP and 2-C-methyl-D-erythritol 4-phosphate (MEP). This is 2-C-methyl-D-erythritol 4-phosphate cytidylyltransferase from Aliivibrio fischeri (strain MJ11) (Vibrio fischeri).